A 175-amino-acid chain; its full sequence is Large ribosomal subunit protein bL17m (175 aa).

A mitochondrion-targeting transit peptide spans 1 to 8 (MRLSVCAA). Positions 155–175 (DLSQSQEASNHSSHTAQTPGI) are disordered. The span at 157–175 (SQSQEASNHSSHTAQTPGI) shows a compositional bias: polar residues.

It belongs to the bacterial ribosomal protein bL17 family. In terms of assembly, component of the mitochondrial ribosome large subunit (39S) which comprises a 16S rRNA and about 50 distinct proteins.

Its subcellular location is the mitochondrion. In Pongo abelii (Sumatran orangutan), this protein is Large ribosomal subunit protein bL17m (MRPL17).